The chain runs to 169 residues: Peptide deformylase 1 (169 aa).

Fe cation is bound by residues C93 and H135. E136 is a catalytic residue. Residue H139 coordinates Fe cation.

It belongs to the polypeptide deformylase family. The cofactor is Fe(2+).

The catalysed reaction is N-terminal N-formyl-L-methionyl-[peptide] + H2O = N-terminal L-methionyl-[peptide] + formate. Its function is as follows. Removes the formyl group from the N-terminal Met of newly synthesized proteins. Requires at least a dipeptide for an efficient rate of reaction. N-terminal L-methionine is a prerequisite for activity but the enzyme has broad specificity at other positions. The polypeptide is Peptide deformylase 1 (Corynebacterium efficiens (strain DSM 44549 / YS-314 / AJ 12310 / JCM 11189 / NBRC 100395)).